The sequence spans 482 residues: G patch domain-containing protein 2-like (482 aa).

A phosphoserine mark is found at Ser-31, Ser-86, and Ser-88. Thr-91 is subject to Phosphothreonine. 2 disordered regions span residues 195-222 (SQPG…SECD) and 408-482 (KRKR…TNGC). Residues 198 to 215 (GRKERMECEAEEQKHGSD) show a composition bias toward basic and acidic residues. Low complexity predominate over residues 414–427 (VASASFSSPSPVHP). Positions 468–482 (EKNSGCSSSPGTNGC) are enriched in polar residues.

This is G patch domain-containing protein 2-like (Gpatch2l) from Mus musculus (Mouse).